The primary structure comprises 830 residues: FYN-binding protein 1 (830 aa).

A disordered region spans residues 1–501; sequence MDGKTDVKSL…REKKEQELRK (501 aa). Position 13 is an N6-acetyllysine (Lys-13). Over residues 15-55 the composition is skewed to polar residues; the sequence is NTGSNPTEEVSTSSRPFKVAGQNSPSGIQSKKNLFDNQGNA. A phosphoserine mark is found at Ser-38 and Ser-56. The span at 79–89 shows a compositional bias: basic and acidic residues; sequence TYEEKSEKEPK. Phosphoserine is present on Ser-233. 2 stretches are compositionally biased toward basic and acidic residues: residues 248 to 259 and 284 to 296; these read PAKEDPEDKDHG and NSEE…KTDI. Ser-329 carries the phosphoserine modification. A compositionally biased stretch (basic and acidic residues) spans 330–339; the sequence is QEKEGDKDSA. 2 stretches are compositionally biased toward pro residues: residues 344–362 and 391–407; these read KPLP…PSRP and LPPP…PLPA. The interaction with SKAP1 stretch occupies residues 347–447; the sequence is PPLSVLGPPP…QDGVMHSDGT (101 aa). Acidic residues predominate over residues 450-464; it reads LEEEQESDGEMYEDI. A Phosphoserine modification is found at Ser-456. Residues 461–464 carry the SH2-binding motif; that stretch reads YEDI. A compositionally biased stretch (basic and acidic residues) spans 465–500; it reads ESSKERDKKREKEEKKRLELERKEQKEREKKEQELR. Residues 465–502 adopt a coiled-coil conformation; it reads ESSKERDKKREKEEKKRLELERKEQKEREKKEQELRKK. The Nuclear localization signal signature appears at 479-486; it reads KKRLELER. Residues 510–571 form the SH3 1 domain; the sequence is QVIHHAKACC…KTTAVKIDYD (62 aa). Residue Tyr-570 is modified to Phosphotyrosine. Position 572 is a phosphoserine (Ser-572). The SH2-binding; to LCP2 signature appears at 595 to 598; sequence YDDV. 2 disordered regions span residues 601–646 and 660–739; these read QDAP…DEKT and KDER…EKEE. Over residues 621–636 the composition is skewed to acidic residues; sequence ADDDIYDGIEEEDADD. The SH2-binding; to FYN motif lies at 626 to 629; it reads YDGI. Positions 660 to 675 are enriched in basic and acidic residues; it reads KDERKKSIREKPKVSE. Acidic residues predominate over residues 693 to 703; the sequence is VGEEVYDDVDA. Tyr-698 is modified (phosphotyrosine). The segment covering 722 to 739 has biased composition (basic and acidic residues); sequence TKAEEKDPKKLKKQEKEE. The Nuclear localization signal signature appears at 732–739; sequence LKKQEKEE. In terms of domain architecture, SH3 2 spans 747–815; it reads KYDGEIRVLY…LRSYLVDNDG (69 aa).

In terms of assembly, part of a complex consisting of SKAP2, FYB1 and PTPNS1. Part of a complex consisting of SKAP2, FYB1 and LILRB3. Part of a complex consisting of SKAP1, FYB1 and CLNK. Interacts with CLNK (via its SH2 domain) and FYN; this interaction allows SKAP1 and FYB1 to recruit FYN to the complex, thus promoting the phosphorylation of CLNK by FYN. Interacts with FYN. Interacts with LCP2. Interacts with SKAP1. Interacts with SKAP2. Interacts with FASLG. Interacts with EVL. Interacts with TMEM47. Interacts with LCK. T-cell receptor ligation leads to increased tyrosine phosphorylation.

The protein resides in the cytoplasm. The protein localises to the nucleus. It is found in the cell junction. Functionally, acts as an adapter protein of the FYN and LCP2 signaling cascades in T-cells. May play a role in linking T-cell signaling to remodeling of the actin cytoskeleton. Modulates the expression of IL2. Involved in platelet activation. Prevents the degradation of SKAP1 and SKAP2. May be involved in high affinity immunoglobulin epsilon receptor signaling in mast cells. This is FYN-binding protein 1 from Rattus norvegicus (Rat).